The sequence spans 415 residues: tRNA (cytosine(38)-C(5))-methyltransferase (415 aa).

Positions 4-396 (LRVLELYSGI…TVLCEGFGNA (393 aa)) constitute an SAM-dependent MTase C5-type domain. Residues 13–15 (IGG), aspartate 34, 57–58 (IE), and serine 76 each bind S-adenosyl-L-methionine. Cysteine 79 is a catalytic residue. Residue serine 376 participates in S-adenosyl-L-methionine binding.

Belongs to the class I-like SAM-binding methyltransferase superfamily. C5-methyltransferase family. As to expression, highly expressed in thymus, testis, and at much lower levels in spleen, lung, brain, heart, kidney, liver, skeletal muscle and embryonic stem cells.

The protein resides in the cytoplasm. The enzyme catalyses cytidine(38) in tRNA + S-adenosyl-L-methionine = 5-methylcytidine(38) in tRNA + S-adenosyl-L-homocysteine + H(+). Its function is as follows. Specifically methylates cytosine 38 in the anticodon loop of tRNA(Asp). Has higher activity on tRNA(Asp) modified with queuosine at position 34. In Mus musculus (Mouse), this protein is tRNA (cytosine(38)-C(5))-methyltransferase (Trdmt1).